The chain runs to 615 residues: Neurosecretory protein VGF (615 aa).

An N-terminal signal peptide occupies residues 1–22 (MKALRLSASALFCLLLINGLGA). Disordered regions lie at residues 22 to 201 (AAPP…ESPG) and 218 to 257 (PERA…PKTH). Composition is skewed to pro residues over residues 25-35 (PGRPEAQPPPL) and 129-141 (PESP…PRPQ). The span at 179–194 (ETAAAETETRTHTLTR) shows a compositional bias: low complexity. Q310 is modified (pyrrolidone carboxylic acid). The tract at residues 342–600 (RQRGLGGRGL…EAEERRLQEQ (259 aa)) is disordered. Over residues 378–394 (VGEEDEEAAEAEAEAEE) the composition is skewed to acidic residues. Over residues 415–433 (AEDKRSQEETPGHRRKEAE) the composition is skewed to basic and acidic residues. Phosphoserine; by FAM20C is present on S420. Residue T424 is modified to Phosphothreonine; by FAM20C. Positions 434–448 (GTEEGGEEEDDEEMD) are enriched in acidic residues. The span at 487–497 (PPEPVPPPRAA) shows a compositional bias: pro residues. P577 is subject to Proline amide. Residues 577-599 (PGREAQARRAQEEAEAEERRLQE) show a composition bias toward basic and acidic residues.

As to quaternary structure, interacts with HSPA8 on cell membrane. Interacts with C3AR1. Interacts with C1QBP. Multiple peptides are derived from VGF, with activities in synaptic plasticity, antidepression, penile erection, autonomic activation, and increases in energy expenditure. Central and peripheral nervous systems, synthesized exclusively in neuronal and neuroendocrine cells.

It localises to the secreted. Its subcellular location is the cytoplasmic vesicle. The protein resides in the secretory vesicle. Functionally, secreted polyprotein that is packaged and proteolytically processed by prohormone convertases PCSK1 and PCSK2 in a cell-type-specific manner. VGF and peptides derived from its processing play many roles in neurogenesis and neuroplasticity associated with learning, memory, depression and chronic pain. Plays a role in the control of body fluid homeostasis by regulating vasopressin release. Suppresses presynaptic glutamatergic neurons connected to vasopressin neurons. In terms of biological role, plays a role in the control of body fluid homeostasis by regulating vasopressin release. Activates GABAergic interneurons which are inhibitory neurons of the nervous system and thereby suppresses presynaptic glutamatergic neurons. Also stimulates feeding behavior in an orexin-dependent manner in the hypothalamus. Functions as a positive regulator for the activation of orexin neurons resulting in elevated gastric acid secretion and gastric emptying. Its function is as follows. Secreted multifunctional neuropeptide that binds to different cell receptors and thereby plays multiple physiological roles including modulation of energy expenditure, pain, response to stress, gastric regulation, glucose homeostasis as well as lipolysis. Activates the G-protein-coupled receptor C3AR1 via a folding-upon-binding mechanism leading to enhanced lipolysis in adipocytes. Interacts with C1QBP receptor in macrophages and microglia causing increased levels of intracellular calcium and hypersensitivity. Functionally, plays a role in the regulation of memory formation and depression-related behaviors potentially by influencing synaptic plasticity and neurogenesis. Induces acute and transient activation of the NTRK2/TRKB receptor and subsequent CREB phosphorylation. Also induces insulin secretion in insulinoma cells by increasing intracellular calcium mobilization. Has bactericidal activity against M.luteus, and antifungal activity against P. Pastoris. This is Neurosecretory protein VGF (VGF) from Homo sapiens (Human).